Here is a 223-residue protein sequence, read N- to C-terminus: von Willebrand factor C domain-containing protein 2-like (223 aa).

The N-terminal stretch at 1-21 is a signal peptide; it reads MGPFLPAICVVLLALNAAVSP. VWFC domains are found at residues 51-110 and 114-172; these read KGCV…PECK and NFCE…PICK.

Its subcellular location is the secreted. The protein resides in the synapse. Functionally, may play a role in bone differentiation and matrix mineralization. May play a role in neural development. This chain is von Willebrand factor C domain-containing protein 2-like (vwc2l), found in Danio rerio (Zebrafish).